Reading from the N-terminus, the 148-residue chain is U5-hexatoxin-Hi1a (148 aa).

A signal peptide spans 1 to 21 (MNFSVVAVALVVVLTVHFTDG). Residues 22–38 (QETSSSLPSPPSPLPGR) constitute a propeptide that is removed on maturation. The disordered stretch occupies residues 125-148 (TPSTTVTTPTPTTETPTTETPSTP).

Post-translationally, contains 2 disulfide bonds. As to expression, expressed by the venom gland.

The protein localises to the secreted. Functionally, probable ion channel inhibitor. This Hadronyche infensa (Fraser island funnel-web spider) protein is U5-hexatoxin-Hi1a.